The following is a 1092-amino-acid chain: Neural cell adhesion molecule 1-B (1092 aa).

Residues 1–19 (MLHIKDLIWTLYFIGAAVA) form the signal peptide. Ig-like C2-type domains are found at residues 20–108 (LEVN…GTVN), 113–202 (QKLT…KDIQ), 208–295 (PPLI…EAIV), 303–397 (PKMT…FEVQ), and 400–489 (PKIR…FILV). The Extracellular portion of the chain corresponds to 20–705 (LEVNIVPDQG…ATSASTGLGT (686 aa)). 2 cysteine pairs are disulfide-bonded: Cys-41/Cys-93 and Cys-136/Cys-186. N-linked (GlcNAc...) asparagine glycosylation occurs at Asn-82. Residues 149–153 (RHKGK) and 158–162 (KKDVR) contribute to the heparin site. Asn-219 carries an N-linked (GlcNAc...) asparagine glycan. Cys-232 and Cys-282 are joined by a disulfide. N-linked (GlcNAc...) asparagine glycans are attached at residues Asn-310, Asn-341, Asn-417, Asn-443, and Asn-472. The cysteines at positions 323 and 379 are disulfide-linked. Cys-420 and Cys-473 are oxidised to a cystine. Fibronectin type-III domains follow at residues 493–592 (TPSS…TQPV) and 595–691 (EPSA…TAKP). Residues 706–723 (GAIVGILIVTFVLLLVVV) form a helical membrane-spanning segment. At 724 to 1092 (DVTCFFLNKC…TQRNVNESKA (369 aa)) the chain is on the cytoplasmic side. Over residues 754–784 (KDIEEGKAAFSKDESKEPIVEVRTEEERTPN) the composition is skewed to basic and acidic residues. 2 disordered regions span residues 754-1005 (KDIE…GGTF) and 1024-1092 (TPAA…ESKA). Low complexity-rich tracts occupy residues 820-832 (TTVT…ITET) and 839-851 (SPTS…TSST). Over residues 860-871 (DSNTVQSVQATP) the composition is skewed to polar residues. Over residues 917 to 929 (PSAATSAAEPPTA) the composition is skewed to low complexity. The segment covering 968-978 (AQPSTVKSPTE) has biased composition (polar residues). The span at 1050–1068 (AKTEKTQVEENSKPEETDV) shows a compositional bias: basic and acidic residues. A compositionally biased stretch (polar residues) spans 1080-1092 (NEATQRNVNESKA).

In terms of processing, polysialylated by ST8SIA2 and ST8SIA4. Polysialylation modulates cell interactions by confering both attractive and repulsive properties that are highly regulated by ST8SIA2 and ST8SIA4. Polysialylation is formed on a-2,3-linked sialic acid of core glycans.

The protein localises to the cell membrane. In terms of biological role, this protein is a cell adhesion molecule involved in neuron-neuron adhesion, neurite fasciculation, outgrowth of neurites, etc. This chain is Neural cell adhesion molecule 1-B, found in Xenopus laevis (African clawed frog).